Consider the following 232-residue polypeptide: Ubiquinone biosynthesis O-methyltransferase (232 aa).

The S-adenosyl-L-methionine site is built by arginine 36, glycine 55, aspartate 76, and methionine 120.

This sequence belongs to the methyltransferase superfamily. UbiG/COQ3 family.

The catalysed reaction is a 3-demethylubiquinol + S-adenosyl-L-methionine = a ubiquinol + S-adenosyl-L-homocysteine + H(+). It catalyses the reaction a 3-(all-trans-polyprenyl)benzene-1,2-diol + S-adenosyl-L-methionine = a 2-methoxy-6-(all-trans-polyprenyl)phenol + S-adenosyl-L-homocysteine + H(+). It functions in the pathway cofactor biosynthesis; ubiquinone biosynthesis. Its function is as follows. O-methyltransferase that catalyzes the 2 O-methylation steps in the ubiquinone biosynthetic pathway. In Paraburkholderia xenovorans (strain LB400), this protein is Ubiquinone biosynthesis O-methyltransferase.